A 415-amino-acid polypeptide reads, in one-letter code: Serine hydroxymethyltransferase 2 (415 aa).

(6S)-5,6,7,8-tetrahydrofolate-binding positions include leucine 121 and 125–127 (GHL). Lysine 229 carries the post-translational modification N6-(pyridoxal phosphate)lysine.

This sequence belongs to the SHMT family. As to quaternary structure, homodimer. It depends on pyridoxal 5'-phosphate as a cofactor.

It is found in the cytoplasm. The catalysed reaction is (6R)-5,10-methylene-5,6,7,8-tetrahydrofolate + glycine + H2O = (6S)-5,6,7,8-tetrahydrofolate + L-serine. It functions in the pathway one-carbon metabolism; tetrahydrofolate interconversion. The protein operates within amino-acid biosynthesis; glycine biosynthesis; glycine from L-serine: step 1/1. Its function is as follows. Catalyzes the reversible interconversion of serine and glycine with tetrahydrofolate (THF) serving as the one-carbon carrier. This reaction serves as the major source of one-carbon groups required for the biosynthesis of purines, thymidylate, methionine, and other important biomolecules. Also exhibits THF-independent aldolase activity toward beta-hydroxyamino acids, producing glycine and aldehydes, via a retro-aldol mechanism. This chain is Serine hydroxymethyltransferase 2, found in Bordetella parapertussis (strain 12822 / ATCC BAA-587 / NCTC 13253).